Reading from the N-terminus, the 199-residue chain is Ras-related protein Rab-7b (199 aa).

Residues 15–22 (GALGVGKT), 34–40 (FEEYQTT), 63–67 (DTGGQ), 124–127 (NKID), and 154–155 (AK) each bind GTP. 2 short sequence motifs (switch) span residues 28 to 41 (YVHK…QTTL) and 67 to 82 (QERF…KGSD). S186 carries the phosphoserine modification. S-geranylgeranyl cysteine attachment occurs at residues C198 and C199.

The protein belongs to the small GTPase superfamily. Rab family.

It localises to the late endosome. The protein resides in the lysosome. Its subcellular location is the golgi apparatus. The protein localises to the trans-Golgi network. It is found in the cytoplasmic vesicle. It localises to the phagosome. The protein resides in the phagosome membrane. Functionally, controls vesicular trafficking from endosomes to the trans-Golgi network (TGN). Acts as a negative regulator of TLR9 signaling and can suppress TLR9-triggered TNFA, IL6, and IFNB production in macrophages by promoting TLR9 lysosomal degradation. Also negatively regulates TLR4 signaling in macrophages by promoting lysosomal degradation of TLR4. Promotes megakaryocytic differentiation by increasing NF-kappa-B-dependent IL6 production and subsequently enhancing the association of STAT3 with GATA1. Not involved in the regulation of the EGF- and EGFR degradation pathway. The protein is Ras-related protein Rab-7b (Rab7b) of Mus musculus (Mouse).